Consider the following 156-residue polypeptide: Ribosomal RNA large subunit methyltransferase H (156 aa).

S-adenosyl-L-methionine is bound by residues Leu-73, Gly-104, and 123 to 128; that span reads LSSLTL.

The protein belongs to the RNA methyltransferase RlmH family. In terms of assembly, homodimer.

The protein localises to the cytoplasm. The catalysed reaction is pseudouridine(1915) in 23S rRNA + S-adenosyl-L-methionine = N(3)-methylpseudouridine(1915) in 23S rRNA + S-adenosyl-L-homocysteine + H(+). Functionally, specifically methylates the pseudouridine at position 1915 (m3Psi1915) in 23S rRNA. The sequence is that of Ribosomal RNA large subunit methyltransferase H from Neisseria meningitidis serogroup C / serotype 2a (strain ATCC 700532 / DSM 15464 / FAM18).